The following is a 363-amino-acid chain: Ribonuclease P protein subunit p40 (363 aa).

Component of nuclear RNase P and RNase MRP ribonucleoproteins. RNase P consists of a catalytic RNA moiety and about 10 protein subunits; POP1, POP4, POP5, POP7, RPP14, RPP21, RPP25, RPP30, RPP38 and RPP40. Within the RNase P complex, POP1, POP7 and RPP25 form the 'finger' subcomplex, POP5, RPP14, RPP40 and homodimeric RPP30 form the 'palm' subcomplex, and RPP21, POP4 and RPP38 form the 'wrist' subcomplex. All subunits of the RNase P complex interact with the catalytic RNA. Several subunits of RNase P are also part of the RNase MRP complex. RNase MRP consists of a catalytic RNA moiety and about 8 protein subunits; POP1, POP7, RPP25, RPP30, RPP38, RPP40 and possibly also POP4 and POP5.

The protein resides in the nucleus. It localises to the nucleolus. In terms of biological role, component of ribonuclease P, a ribonucleoprotein complex that generates mature tRNA molecules by cleaving their 5'-ends. Also a component of the MRP ribonuclease complex, which cleaves pre-rRNA sequences. This is Ribonuclease P protein subunit p40 (RPP40) from Homo sapiens (Human).